Here is a 208-residue protein sequence, read N- to C-terminus: Ribonuclease HII (208 aa).

The 194-residue stretch at 5–198 (PLIAGVDEVG…CQPRLEHDCR (194 aa)) folds into the RNase H type-2 domain. Positions 11, 12, and 106 each coordinate a divalent metal cation.

This sequence belongs to the RNase HII family. It depends on Mn(2+) as a cofactor. Mg(2+) serves as cofactor.

The protein resides in the cytoplasm. The enzyme catalyses Endonucleolytic cleavage to 5'-phosphomonoester.. In terms of biological role, endonuclease that specifically degrades the RNA of RNA-DNA hybrids. The sequence is that of Ribonuclease HII from Microcystis aeruginosa (strain NIES-843 / IAM M-2473).